The following is a 252-amino-acid chain: N-glycosylase/DNA lyase (252 aa).

Glutamine 32, serine 60, and tryptophan 71 together coordinate 8-oxoguanine. The helix-hairpin-helix stretch occupies residues 129–193 (KTYYSDMEKL…KDSRIEKYTL (65 aa)). Lysine 153 (schiff-base intermediate with DNA) is an active-site residue. 8-oxoguanine-binding residues include phenylalanine 157 and proline 183. The active site involves aspartate 185. Positions 219 and 223 each coordinate 8-oxoguanine.

It belongs to the archaeal N-glycosylase/DNA lyase (AGOG) family.

It catalyses the reaction 2'-deoxyribonucleotide-(2'-deoxyribose 5'-phosphate)-2'-deoxyribonucleotide-DNA = a 3'-end 2'-deoxyribonucleotide-(2,3-dehydro-2,3-deoxyribose 5'-phosphate)-DNA + a 5'-end 5'-phospho-2'-deoxyribonucleoside-DNA + H(+). Functionally, DNA repair enzyme that is part of the base excision repair (BER) pathway; protects from oxidative damage by removing the major product of DNA oxidation, 8-oxoguanine (GO), from single- and double-stranded DNA substrates. This chain is N-glycosylase/DNA lyase, found in Methanococcus maripaludis (strain DSM 14266 / JCM 13030 / NBRC 101832 / S2 / LL).